A 312-amino-acid chain; its full sequence is MKHLLSIADLSRDEIISLLDEADRFKEVLEGREVKKLPTLRGRTIFTLFYENSTRTRSSFETAGKWMSADVINISASSSSVKKGESLKDTGLTLSAIGADAIIMRHPSSGAAQQLAGYVAPGGVGPSVINAGDGSHQHPTQALLDALTLRQRLGGIEGRKIVIVGDILHSRVVRSNVDLLSTLGAEVILVAPPTLLPYGVENWPVRTSYDMDAEIRDADAVMMLRVQQERMQGGFFPSHREYATLYGMSKAREASLKDSAIIMHPGPMLRGMEINFGVADAPRTAVLQQVSNGVHVRMAVLFALVAGSDATI.

Carbamoyl phosphate is bound by residues arginine 55 and threonine 56. Lysine 83 contacts L-aspartate. Positions 105, 138, and 141 each coordinate carbamoyl phosphate. Positions 171 and 225 each coordinate L-aspartate. Glycine 266 and proline 267 together coordinate carbamoyl phosphate.

This sequence belongs to the aspartate/ornithine carbamoyltransferase superfamily. ATCase family. In terms of assembly, heterododecamer (2C3:3R2) of six catalytic PyrB chains organized as two trimers (C3), and six regulatory PyrI chains organized as three dimers (R2).

It catalyses the reaction carbamoyl phosphate + L-aspartate = N-carbamoyl-L-aspartate + phosphate + H(+). It participates in pyrimidine metabolism; UMP biosynthesis via de novo pathway; (S)-dihydroorotate from bicarbonate: step 2/3. In terms of biological role, catalyzes the condensation of carbamoyl phosphate and aspartate to form carbamoyl aspartate and inorganic phosphate, the committed step in the de novo pyrimidine nucleotide biosynthesis pathway. The protein is Aspartate carbamoyltransferase catalytic subunit of Corynebacterium efficiens (strain DSM 44549 / YS-314 / AJ 12310 / JCM 11189 / NBRC 100395).